Consider the following 468-residue polypeptide: Probable ubiquitin carboxyl-terminal hydrolase R319 (468 aa).

A USP domain is found at 42 to 462 (TGIMNLGNTC…NAYILFYIRS (421 aa)). The active-site Nucleophile is C51. The active-site Proton acceptor is the H420.

This sequence belongs to the peptidase C19 family.

The catalysed reaction is Thiol-dependent hydrolysis of ester, thioester, amide, peptide and isopeptide bonds formed by the C-terminal Gly of ubiquitin (a 76-residue protein attached to proteins as an intracellular targeting signal).. The protein is Probable ubiquitin carboxyl-terminal hydrolase R319 of Acanthamoeba polyphaga (Amoeba).